A 396-amino-acid chain; its full sequence is Phosphopentomutase (396 aa).

6 residues coordinate Mn(2+): Asp-14, Asp-286, His-291, Asp-327, His-328, and His-339.

This sequence belongs to the phosphopentomutase family. Mn(2+) serves as cofactor.

It is found in the cytoplasm. The catalysed reaction is 2-deoxy-alpha-D-ribose 1-phosphate = 2-deoxy-D-ribose 5-phosphate. The enzyme catalyses alpha-D-ribose 1-phosphate = D-ribose 5-phosphate. The protein operates within carbohydrate degradation; 2-deoxy-D-ribose 1-phosphate degradation; D-glyceraldehyde 3-phosphate and acetaldehyde from 2-deoxy-alpha-D-ribose 1-phosphate: step 1/2. Functionally, isomerase that catalyzes the conversion of deoxy-ribose 1-phosphate (dRib-1-P) and ribose 1-phosphate (Rib-1-P) to deoxy-ribose 5-phosphate (dRib-5-P) and ribose 5-phosphate (Rib-5-P), respectively. In Staphylococcus epidermidis (strain ATCC 35984 / DSM 28319 / BCRC 17069 / CCUG 31568 / BM 3577 / RP62A), this protein is Phosphopentomutase.